A 276-amino-acid chain; its full sequence is Large ribosomal subunit protein uL2 (276 aa).

Residues 224–258 (VAMNPVDHPHGGGEGRTGEGRVPVSPWGTPTKGYR) form a disordered region. Over residues 230 to 242 (DHPHGGGEGRTGE) the composition is skewed to basic and acidic residues.

Belongs to the universal ribosomal protein uL2 family. Part of the 50S ribosomal subunit. Forms a bridge to the 30S subunit in the 70S ribosome.

Functionally, one of the primary rRNA binding proteins. Required for association of the 30S and 50S subunits to form the 70S ribosome, for tRNA binding and peptide bond formation. It has been suggested to have peptidyltransferase activity; this is somewhat controversial. Makes several contacts with the 16S rRNA in the 70S ribosome. The sequence is that of Large ribosomal subunit protein uL2 from Polynucleobacter necessarius subsp. necessarius (strain STIR1).